The chain runs to 295 residues: Ribosomal RNA small subunit methyltransferase H (295 aa).

Residues G35 to H37, E55, F82, D103, and Q110 each bind S-adenosyl-L-methionine.

It belongs to the methyltransferase superfamily. RsmH family.

The protein resides in the cytoplasm. It carries out the reaction cytidine(1402) in 16S rRNA + S-adenosyl-L-methionine = N(4)-methylcytidine(1402) in 16S rRNA + S-adenosyl-L-homocysteine + H(+). Specifically methylates the N4 position of cytidine in position 1402 (C1402) of 16S rRNA. The polypeptide is Ribosomal RNA small subunit methyltransferase H (Desulfotalea psychrophila (strain LSv54 / DSM 12343)).